A 24-amino-acid chain; its full sequence is uncharacterized protein (24 aa).

Topologically, residues 1–3 are cytoplasmic; sequence MKK. Residues 4-24 form a helical membrane-spanning segment; that stretch reads TTIIMMGVAIIVVLGTELGWW.

It is found in the cell inner membrane. This is an uncharacterized protein from Escherichia coli (strain K12).